Reading from the N-terminus, the 309-residue chain is Ribosomal RNA small subunit methyltransferase H (309 aa).

S-adenosyl-L-methionine contacts are provided by residues 33–35 (GGH), D53, F79, D100, and Q107.

This sequence belongs to the methyltransferase superfamily. RsmH family.

Its subcellular location is the cytoplasm. It catalyses the reaction cytidine(1402) in 16S rRNA + S-adenosyl-L-methionine = N(4)-methylcytidine(1402) in 16S rRNA + S-adenosyl-L-homocysteine + H(+). Functionally, specifically methylates the N4 position of cytidine in position 1402 (C1402) of 16S rRNA. In Clostridium botulinum (strain Okra / Type B1), this protein is Ribosomal RNA small subunit methyltransferase H.